Here is a 385-residue protein sequence, read N- to C-terminus: Mitochondrial fission regulator 2 (385 aa).

An N-acetylserine modification is found at serine 2. Position 119 is a phosphoserine (serine 119). Residues 195 to 268 (SVDPDQLPGS…SHHSKSQRNK (74 aa)) form a disordered region. Over residues 207-216 (SPPPPPPLPP) the composition is skewed to pro residues. Residues 231-257 (PGSNNICDSDNPATEMSKQNPAANKTN) are compositionally biased toward polar residues. Phosphoserine is present on residues serine 291 and serine 328. Positions 331 to 363 (KENRSWESSPFSSPETSRFGHHISQSEGQRTKE) are disordered. Over residues 336 to 346 (WESSPFSSPET) the composition is skewed to polar residues.

The protein belongs to the MTFR1 family.

The protein resides in the mitochondrion. Functionally, may play a role in mitochondrial aerobic respiration essentially in the testis. Can also promote mitochondrial fission. This is Mitochondrial fission regulator 2 (MTFR2) from Homo sapiens (Human).